A 632-amino-acid chain; its full sequence is tRNA uridine 5-carboxymethylaminomethyl modification enzyme MnmG (632 aa).

Residues 15 to 20, Ile127, and Ser182 contribute to the FAD site; that span reads GAGHAG. An NAD(+)-binding site is contributed by 276-290; sequence GPRYCPSIEDKIVRF. An FAD-binding site is contributed by Gln373.

It belongs to the MnmG family. In terms of assembly, homodimer. Heterotetramer of two MnmE and two MnmG subunits. The cofactor is FAD.

The protein localises to the cytoplasm. Its function is as follows. NAD-binding protein involved in the addition of a carboxymethylaminomethyl (cmnm) group at the wobble position (U34) of certain tRNAs, forming tRNA-cmnm(5)s(2)U34. The polypeptide is tRNA uridine 5-carboxymethylaminomethyl modification enzyme MnmG (Streptococcus pyogenes serotype M1).